The chain runs to 241 residues: Small ribosomal subunit protein uS2 (241 aa).

Belongs to the universal ribosomal protein uS2 family.

The polypeptide is Small ribosomal subunit protein uS2 (Shigella flexneri serotype 5b (strain 8401)).